We begin with the raw amino-acid sequence, 258 residues long: Imidazole glycerol phosphate synthase subunit HisF (258 aa).

Catalysis depends on residues Asp-11 and Asp-130.

Belongs to the HisA/HisF family. Heterodimer of HisH and HisF.

It localises to the cytoplasm. The enzyme catalyses 5-[(5-phospho-1-deoxy-D-ribulos-1-ylimino)methylamino]-1-(5-phospho-beta-D-ribosyl)imidazole-4-carboxamide + L-glutamine = D-erythro-1-(imidazol-4-yl)glycerol 3-phosphate + 5-amino-1-(5-phospho-beta-D-ribosyl)imidazole-4-carboxamide + L-glutamate + H(+). It functions in the pathway amino-acid biosynthesis; L-histidine biosynthesis; L-histidine from 5-phospho-alpha-D-ribose 1-diphosphate: step 5/9. Functionally, IGPS catalyzes the conversion of PRFAR and glutamine to IGP, AICAR and glutamate. The HisF subunit catalyzes the cyclization activity that produces IGP and AICAR from PRFAR using the ammonia provided by the HisH subunit. The sequence is that of Imidazole glycerol phosphate synthase subunit HisF from Stenotrophomonas maltophilia (strain K279a).